The chain runs to 346 residues: Elongation factor Ts (346 aa).

The involved in Mg(2+) ion dislocation from EF-Tu stretch occupies residues 80 to 83 (TDFV).

Belongs to the EF-Ts family.

Its subcellular location is the cytoplasm. Associates with the EF-Tu.GDP complex and induces the exchange of GDP to GTP. It remains bound to the aminoacyl-tRNA.EF-Tu.GTP complex up to the GTP hydrolysis stage on the ribosome. This Streptococcus suis (strain 98HAH33) protein is Elongation factor Ts.